A 78-amino-acid chain; its full sequence is Kunitz-type serine protease inhibitor conotoxin Cal9.1a (78 aa).

Residues 1–16 (MTFLLLLVSVCMMATG) form the signal peptide. Residues 17 to 20 (EERT) constitute a propeptide that is removed on maturation. Residues 25-75 (CELPFEEGPCFAAIRVYAYNAETGDCEQLTYGGCEGNGNRFATLEDCDNAC) form the BPTI/Kunitz inhibitor domain. 3 disulfide bridges follow: cysteine 25–cysteine 75, cysteine 34–cysteine 58, and cysteine 50–cysteine 71.

It belongs to the venom Kunitz-type family. In terms of tissue distribution, expressed by the venom duct.

It localises to the secreted. In Californiconus californicus (California cone), this protein is Kunitz-type serine protease inhibitor conotoxin Cal9.1a.